A 62-amino-acid polypeptide reads, in one-letter code: Large ribosomal subunit protein uL30 (62 aa).

The protein belongs to the universal ribosomal protein uL30 family. As to quaternary structure, part of the 50S ribosomal subunit.

The polypeptide is Large ribosomal subunit protein uL30 (Geobacillus thermodenitrificans (strain NG80-2)).